The chain runs to 485 residues: UDP-N-acetylmuramoyl-L-alanyl-D-glutamate--2,6-diaminopimelate ligase (485 aa).

Serine 32 provides a ligand contact to UDP-N-acetyl-alpha-D-muramoyl-L-alanyl-D-glutamate. ATP is bound at residue 111–117 (GTNGKTT). Residues 153–154 (TT), serine 180, and arginine 188 each bind UDP-N-acetyl-alpha-D-muramoyl-L-alanyl-D-glutamate. Residue lysine 220 is modified to N6-carboxylysine. Meso-2,6-diaminopimelate-binding positions include arginine 382, 405 to 408 (DNPR), glycine 455, and glutamate 459. A Meso-diaminopimelate recognition motif motif is present at residues 405–408 (DNPR).

This sequence belongs to the MurCDEF family. MurE subfamily. The cofactor is Mg(2+). In terms of processing, carboxylation is probably crucial for Mg(2+) binding and, consequently, for the gamma-phosphate positioning of ATP.

It localises to the cytoplasm. The catalysed reaction is UDP-N-acetyl-alpha-D-muramoyl-L-alanyl-D-glutamate + meso-2,6-diaminopimelate + ATP = UDP-N-acetyl-alpha-D-muramoyl-L-alanyl-gamma-D-glutamyl-meso-2,6-diaminopimelate + ADP + phosphate + H(+). It functions in the pathway cell wall biogenesis; peptidoglycan biosynthesis. Catalyzes the addition of meso-diaminopimelic acid to the nucleotide precursor UDP-N-acetylmuramoyl-L-alanyl-D-glutamate (UMAG) in the biosynthesis of bacterial cell-wall peptidoglycan. The chain is UDP-N-acetylmuramoyl-L-alanyl-D-glutamate--2,6-diaminopimelate ligase from Chlamydia felis (strain Fe/C-56) (Chlamydophila felis).